Consider the following 232-residue polypeptide: DNA repair and recombination protein RadB (232 aa).

This sequence belongs to the eukaryotic RecA-like protein family. RadB subfamily.

Involved in DNA repair and in homologous recombination. May regulate the cleavage reactions of the branch-structured DNA. Has a very weak ATPase activity that is not stimulated by DNA. Binds DNA but does not promote DNA strands exchange. The chain is DNA repair and recombination protein RadB from Methanosphaera stadtmanae (strain ATCC 43021 / DSM 3091 / JCM 11832 / MCB-3).